A 677-amino-acid chain; its full sequence is Platelet glycoprotein Ib alpha chain (677 aa).

A signal peptide spans 1 to 16; it reads MHLLLWLLLLARLCRP. One can recognise an LRRNT domain in the interval 17–47; it reads EFICEVSKVTSQVEVNCDNKGLKALPPGLPG. At 17 to 564 the chain is on the extracellular side; sequence EFICEVSKVT…NPDLCCLLPL (548 aa). A disulfide bridge connects residues Cys-20 and Cys-33. 6 LRR repeats span residues 72-93, 94-115, 117-138, 141-162, 165-186, and 189-210; these read RLAQ…GMLP, RLET…GRAL, ALTT…TLDG, HLHE…LLAP, QLRK…FLEG, and ELDT…FFGD. Residues 221–282 form the LRRCT domain; that stretch reads NPWSCDCEIL…HTYQGKDCPS (62 aa). 2 cysteine pairs are disulfide-bonded: Cys-225/Cys-264 and Cys-227/Cys-280. A sulfotyrosine mark is found at Tyr-291 and Tyr-294. 11 O-linked (GalNAc...) threonine glycosylation sites follow: Thr-309, Thr-319, Thr-323, Thr-324, Thr-346, Thr-354, Thr-368, Thr-372, Thr-376, Thr-377, and Thr-399. The segment at 359-499 is disordered; the sequence is TLGPIMPTTT…EPTTTPTSPT (141 aa). Low complexity-rich tracts occupy residues 362-385, 393-403, 411-421, and 427-470; these read PIMP…TTPT, PTTLEPTTTPI, and TPST…TPTI. The segment covering 471–485 has biased composition (pro residues); it reads PELPTPPTTPEPTMP. Residues 486-499 are compositionally biased toward low complexity; sequence PTTLEPTTTPTSPT. An O-linked (GalNAc...) threonine glycan is attached at Thr-487. Ser-497 carries an O-linked (GalNAc...) serine glycan. A glycan (O-linked (GalNAc...) threonine) is linked at Thr-500. Ser-523 is a glycosylation site (O-linked (GalNAc...) serine). A helical transmembrane segment spans residues 565-585; that stretch reads GFYILGLLWLLFASVVLILLL. Topologically, residues 586–677 are cytoplasmic; sequence TWAQHVKPQA…VGVRYSSHSL (92 aa). 2 positions are modified to phosphoserine: Ser-654 and Ser-657.

In terms of assembly, two GP-Ib beta are disulfide-linked to one GP-Ib alpha. GP-IX is complexed with the GP-Ib heterodimer via a non covalent linkage. Interacts with FLNB. Interacts with FLNA (via filamin repeats 4, 9, 12, 17, 19, 21, and 23). In terms of processing, O-glycosylated. Glycocalicin is the product of a proteolytic cleavage/shedding, catalyzed by ADAM17, which releases most of the extracellular domain. Binding sites for vWF and thrombin are in this part of the protein.

It is found in the membrane. In terms of biological role, GP-Ib, a surface membrane protein of platelets, participates in the formation of platelet plugs by binding to the A1 domain of vWF, which is already bound to the subendothelium. This chain is Platelet glycoprotein Ib alpha chain (GP1BA), found in Canis lupus familiaris (Dog).